The sequence spans 455 residues: Cysteine--tRNA ligase (455 aa).

Cys-28 lines the Zn(2+) pocket. The 'HIGH' region signature appears at 30-40 (MTVYDYCHLGH). Residues Cys-209, His-234, and Glu-238 each coordinate Zn(2+). The 'KMSKS' region motif lies at 266–270 (KMSKS). Lys-269 is an ATP binding site.

It belongs to the class-I aminoacyl-tRNA synthetase family. In terms of assembly, monomer. It depends on Zn(2+) as a cofactor.

The protein localises to the cytoplasm. It carries out the reaction tRNA(Cys) + L-cysteine + ATP = L-cysteinyl-tRNA(Cys) + AMP + diphosphate. This chain is Cysteine--tRNA ligase, found in Methylobacillus flagellatus (strain ATCC 51484 / DSM 6875 / VKM B-1610 / KT).